A 93-amino-acid polypeptide reads, in one-letter code: Integration host factor subunit beta (93 aa).

The protein belongs to the bacterial histone-like protein family. In terms of assembly, heterodimer of an alpha and a beta chain.

In terms of biological role, this protein is one of the two subunits of integration host factor, a specific DNA-binding protein that functions in genetic recombination as well as in transcriptional and translational control. This Cereibacter sphaeroides (strain KD131 / KCTC 12085) (Rhodobacter sphaeroides) protein is Integration host factor subunit beta.